The following is a 474-amino-acid chain: Synaptotagmin-17 (474 aa).

The interval 60 to 117 (WLMASRSNDKDGDSVHTASDVPLTPRTNSPDGRRSSSDTSKSTYSLTRRISSLDSRRP) is disordered. A compositionally biased stretch (low complexity) spans 96–117 (SDTSKSTYSLTRRISSLDSRRP). 2 positions are modified to phosphoserine: Ser118 and Ser119. 2 consecutive C2 domains span residues 184 to 310 (QLGM…HWWK) and 321 to 455 (ELGE…EQWH).

This sequence belongs to the synaptotagmin family. Expressed in brain and kidney.

The protein resides in the membrane. Plays a role in dendrite formation by melanocytes. In Rattus norvegicus (Rat), this protein is Synaptotagmin-17 (Syt17).